The following is an 89-amino-acid chain: Small ribosomal subunit protein uS15 (89 aa).

Belongs to the universal ribosomal protein uS15 family. As to quaternary structure, part of the 30S ribosomal subunit. Forms a bridge to the 50S subunit in the 70S ribosome, contacting the 23S rRNA.

Its function is as follows. One of the primary rRNA binding proteins, it binds directly to 16S rRNA where it helps nucleate assembly of the platform of the 30S subunit by binding and bridging several RNA helices of the 16S rRNA. Functionally, forms an intersubunit bridge (bridge B4) with the 23S rRNA of the 50S subunit in the ribosome. This chain is Small ribosomal subunit protein uS15, found in Saccharopolyspora erythraea (strain ATCC 11635 / DSM 40517 / JCM 4748 / NBRC 13426 / NCIMB 8594 / NRRL 2338).